A 459-amino-acid chain; its full sequence is Chromosomal replication initiator protein DnaA (459 aa).

Positions 1–83 (MKNAREIWRN…NKLEIHFIEE (83 aa)) are domain I, interacts with DnaA modulators. A domain II region spans residues 83 to 121 (ESQAHKYAPADGSSNESIAVTETKEQPVLLPSKEEGDLG). The interval 122-338 (QLNDKYIFET…GALTRVVAYA (217 aa)) is domain III, AAA+ region. Residues glycine 166, glycine 168, lysine 169, and threonine 170 each contribute to the ATP site. The interval 339–459 (KLVGRPIDPD…IQTLKKALSN (121 aa)) is domain IV, binds dsDNA.

It belongs to the DnaA family. In terms of assembly, oligomerizes as a right-handed, spiral filament on DNA at oriC.

It is found in the cytoplasm. Plays an essential role in the initiation and regulation of chromosomal replication. ATP-DnaA binds to the origin of replication (oriC) to initiate formation of the DNA replication initiation complex once per cell cycle. Binds the DnaA box (a 9 base pair repeat at the origin) and separates the double-stranded (ds)DNA. Forms a right-handed helical filament on oriC DNA; dsDNA binds to the exterior of the filament while single-stranded (ss)DNA is stabiized in the filament's interior. The ATP-DnaA-oriC complex binds and stabilizes one strand of the AT-rich DNA unwinding element (DUE), permitting loading of DNA polymerase. After initiation quickly degrades to an ADP-DnaA complex that is not apt for DNA replication. Binds acidic phospholipids. The polypeptide is Chromosomal replication initiator protein DnaA (Exiguobacterium sp. (strain ATCC BAA-1283 / AT1b)).